The following is a 189-amino-acid chain: UPF0301 protein RP032 (189 aa).

It belongs to the UPF0301 (AlgH) family.

The protein is UPF0301 protein RP032 of Rickettsia prowazekii (strain Madrid E).